Reading from the N-terminus, the 271-residue chain is Putative phosphoenolpyruvate synthase regulatory protein (271 aa).

Position 151-158 (151-158 (GVSRSGKT)) interacts with ADP.

It belongs to the pyruvate, phosphate/water dikinase regulatory protein family. PSRP subfamily.

The enzyme catalyses [pyruvate, water dikinase] + ADP = [pyruvate, water dikinase]-phosphate + AMP + H(+). It carries out the reaction [pyruvate, water dikinase]-phosphate + phosphate + H(+) = [pyruvate, water dikinase] + diphosphate. In terms of biological role, bifunctional serine/threonine kinase and phosphorylase involved in the regulation of the phosphoenolpyruvate synthase (PEPS) by catalyzing its phosphorylation/dephosphorylation. This Burkholderia multivorans (strain ATCC 17616 / 249) protein is Putative phosphoenolpyruvate synthase regulatory protein.